Here is a 495-residue protein sequence, read N- to C-terminus: Glycerol kinase (495 aa).

ADP is bound at residue threonine 11. ATP-binding residues include threonine 11, threonine 12, and serine 13. Residue threonine 11 participates in sn-glycerol 3-phosphate binding. Sn-glycerol 3-phosphate-binding residues include arginine 81, glutamate 82, tyrosine 133, and aspartate 242. Positions 81, 82, 133, 242, and 243 each coordinate glycerol. 4 residues coordinate ADP: threonine 264, glycine 307, glycine 407, and asparagine 411. Residues threonine 264, glycine 307, and glycine 407 each coordinate ATP.

This sequence belongs to the FGGY kinase family.

The catalysed reaction is glycerol + ATP = sn-glycerol 3-phosphate + ADP + H(+). Its pathway is polyol metabolism; glycerol degradation via glycerol kinase pathway; sn-glycerol 3-phosphate from glycerol: step 1/1. Inhibited by fructose 1,6-bisphosphate (FBP). Functionally, key enzyme in the regulation of glycerol uptake and metabolism. Catalyzes the phosphorylation of glycerol to yield sn-glycerol 3-phosphate. This is Glycerol kinase from Thermus brockianus.